We begin with the raw amino-acid sequence, 208 residues long: Ribosomal RNA large subunit methyltransferase E (208 aa).

Positions 61, 63, 81, 97, and 122 each coordinate S-adenosyl-L-methionine. Lys162 functions as the Proton acceptor in the catalytic mechanism.

It belongs to the class I-like SAM-binding methyltransferase superfamily. RNA methyltransferase RlmE family.

Its subcellular location is the cytoplasm. It carries out the reaction uridine(2552) in 23S rRNA + S-adenosyl-L-methionine = 2'-O-methyluridine(2552) in 23S rRNA + S-adenosyl-L-homocysteine + H(+). In terms of biological role, specifically methylates the uridine in position 2552 of 23S rRNA at the 2'-O position of the ribose in the fully assembled 50S ribosomal subunit. The chain is Ribosomal RNA large subunit methyltransferase E from Pseudomonas entomophila (strain L48).